The chain runs to 206 residues: Holliday junction branch migration complex subunit RuvA (206 aa).

Residues 1–68 form a domain I region; that stretch reads MITFVRGMLA…EDAMQLFGFL (68 aa). Positions 69-147 are domain II; that stretch reads EPGERELFGQ…KWREESGLSA (79 aa). A flexible linker region spans residues 147 to 151; sequence AMGAR. Positions 152 to 206 are domain III; sequence ASSRVYEEVELALLALGFAPGEVVRALDAVAPAMAGEEQTEAWLRAAIAWLSEQG.

The protein belongs to the RuvA family. As to quaternary structure, homotetramer. Forms an RuvA(8)-RuvB(12)-Holliday junction (HJ) complex. HJ DNA is sandwiched between 2 RuvA tetramers; dsDNA enters through RuvA and exits via RuvB. An RuvB hexamer assembles on each DNA strand where it exits the tetramer. Each RuvB hexamer is contacted by two RuvA subunits (via domain III) on 2 adjacent RuvB subunits; this complex drives branch migration. In the full resolvosome a probable DNA-RuvA(4)-RuvB(12)-RuvC(2) complex forms which resolves the HJ.

The protein resides in the cytoplasm. Its function is as follows. The RuvA-RuvB-RuvC complex processes Holliday junction (HJ) DNA during genetic recombination and DNA repair, while the RuvA-RuvB complex plays an important role in the rescue of blocked DNA replication forks via replication fork reversal (RFR). RuvA specifically binds to HJ cruciform DNA, conferring on it an open structure. The RuvB hexamer acts as an ATP-dependent pump, pulling dsDNA into and through the RuvAB complex. HJ branch migration allows RuvC to scan DNA until it finds its consensus sequence, where it cleaves and resolves the cruciform DNA. The sequence is that of Holliday junction branch migration complex subunit RuvA from Gloeobacter violaceus (strain ATCC 29082 / PCC 7421).